Consider the following 106-residue polypeptide: Large ribosomal subunit protein uL24 (106 aa).

The protein belongs to the universal ribosomal protein uL24 family. Part of the 50S ribosomal subunit.

Functionally, one of two assembly initiator proteins, it binds directly to the 5'-end of the 23S rRNA, where it nucleates assembly of the 50S subunit. One of the proteins that surrounds the polypeptide exit tunnel on the outside of the subunit. This chain is Large ribosomal subunit protein uL24, found in Polaromonas sp. (strain JS666 / ATCC BAA-500).